Here is a 445-residue protein sequence, read N- to C-terminus: Vacuolar fusion protein CCZ1 homolog (445 aa).

It belongs to the CCZ1 family.

In Dictyostelium discoideum (Social amoeba), this protein is Vacuolar fusion protein CCZ1 homolog.